The sequence spans 251 residues: Octanoyltransferase (251 aa).

The 182-residue stretch at 49–230 (DEIPDQLLIL…ALDDALAGRL (182 aa)) folds into the BPL/LPL catalytic domain. Substrate contacts are provided by residues 87–94 (RGGRITWH), 160–162 (AIG), and 173–175 (GVA). Cys191 acts as the Acyl-thioester intermediate in catalysis.

The protein belongs to the LipB family.

It localises to the cytoplasm. It carries out the reaction octanoyl-[ACP] + L-lysyl-[protein] = N(6)-octanoyl-L-lysyl-[protein] + holo-[ACP] + H(+). The protein operates within protein modification; protein lipoylation via endogenous pathway; protein N(6)-(lipoyl)lysine from octanoyl-[acyl-carrier-protein]: step 1/2. Catalyzes the transfer of endogenously produced octanoic acid from octanoyl-acyl-carrier-protein onto the lipoyl domains of lipoate-dependent enzymes. Lipoyl-ACP can also act as a substrate although octanoyl-ACP is likely to be the physiological substrate. This Corynebacterium glutamicum (strain R) protein is Octanoyltransferase.